Reading from the N-terminus, the 2464-residue chain is Nonribosomal peptide synthetase NPS2 (2464 aa).

The tract at residues 275–670 (DDHHPGTSQP…GRIDTQIKLR (396 aa)) is adenylation 1. Residues 814 to 888 (TKAEGQLLEI…QIAKALDASS (75 aa)) form the Carrier 1 domain. At Ser-848 the chain carries O-(pantetheine 4'-phosphoryl)serine. Positions 924-1325 (IYPPFPLQEG…EGLALDLAQG (402 aa)) are condensation 1. The Carrier 2 domain maps to 1364–1437 (EDLLLRLRKI…RMAASAGKKI (74 aa)). An O-(pantetheine 4'-phosphoryl)serine modification is found at Ser-1398. A condensation 2 region spans residues 1479–1887 (DVFPVTTLQA…LRVLVDDLDA (409 aa)). The region spanning 1917 to 1993 (SSWDEKSSTL…DLVMRAGAED (77 aa)) is the Carrier 3 domain. Ser-1954 is modified (O-(pantetheine 4'-phosphoryl)serine). The tract at residues 2047 to 2340 (GGSRYQHVFG…ATQIQDDLRE (294 aa)) is condensation 3.

This sequence belongs to the NRP synthetase family.

It participates in siderophore biosynthesis. Its function is as follows. Nonribosomal peptide synthetase; part of the siderophore basidioferrin biosynthetic pathway. The biosynthesis of basidioferrin depends on the hydroxylation of ornithine to N(5)-hydroxyornithine, catalyzed by the monooxygenase SMO1. The second step, the acylation of N(5)-hydroxy-L-ornithine is catalyzed by a not yet identified N-acyltransferase. Finally, assembly of basidioferrin is catalyzed by the nonribosomal peptide synthase (NRPS) NPS2 via amide bond formation between three L-AHO molecules to release the linear L-AHO trimer. N-5-acetyl-N-5-hydroxy-L-ornithine (L-AHO) and N-5-cis-anhydromevalonyl-N-5-hydroxy-L-ornithine (L-AMHO) are accepted as the substrates by the NPS2 adenylation (A) domain, but only L-AHO is trimerized. The sequence is that of Nonribosomal peptide synthetase NPS2 from Ceriporiopsis subvermispora (strain B) (White-rot fungus).